Here is a 355-residue protein sequence, read N- to C-terminus: UDP-3-O-acylglucosamine N-acyltransferase (355 aa).

The Proton acceptor role is filled by His-248.

This sequence belongs to the transferase hexapeptide repeat family. LpxD subfamily. In terms of assembly, homotrimer.

The catalysed reaction is a UDP-3-O-[(3R)-3-hydroxyacyl]-alpha-D-glucosamine + a (3R)-hydroxyacyl-[ACP] = a UDP-2-N,3-O-bis[(3R)-3-hydroxyacyl]-alpha-D-glucosamine + holo-[ACP] + H(+). Its pathway is bacterial outer membrane biogenesis; LPS lipid A biosynthesis. Functionally, catalyzes the N-acylation of UDP-3-O-acylglucosamine using 3-hydroxyacyl-ACP as the acyl donor. Is involved in the biosynthesis of lipid A, a phosphorylated glycolipid that anchors the lipopolysaccharide to the outer membrane of the cell. This is UDP-3-O-acylglucosamine N-acyltransferase from Synechococcus elongatus (strain ATCC 33912 / PCC 7942 / FACHB-805) (Anacystis nidulans R2).